The sequence spans 304 residues: GTPase Era (304 aa).

The 169-residue stretch at 9–177 (HSGFVAIVGR…VTTLSQHMPE (169 aa)) folds into the Era-type G domain. Residues 17-24 (GRPNVGKS) form a G1 region. 17–24 (GRPNVGKS) serves as a coordination point for GTP. The G2 stretch occupies residues 43–47 (QTTRN). The tract at residues 64-67 (DTPG) is G3. GTP-binding positions include 64–68 (DTPGI) and 127–130 (NKID). The segment at 127-130 (NKID) is G4. The G5 stretch occupies residues 156 to 158 (ISA). The 78-residue stretch at 208 to 285 (TRQEVPHSVA…YLELWVKVSE (78 aa)) folds into the KH type-2 domain.

This sequence belongs to the TRAFAC class TrmE-Era-EngA-EngB-Septin-like GTPase superfamily. Era GTPase family. Monomer.

It localises to the cytoplasm. Its subcellular location is the cell membrane. Its function is as follows. An essential GTPase that binds both GDP and GTP, with rapid nucleotide exchange. Plays a role in 16S rRNA processing and 30S ribosomal subunit biogenesis and possibly also in cell cycle regulation and energy metabolism. This chain is GTPase Era, found in Pediococcus pentosaceus (strain ATCC 25745 / CCUG 21536 / LMG 10740 / 183-1w).